Here is a 298-residue protein sequence, read N- to C-terminus: UDP-3-O-acyl-N-acetylglucosamine deacetylase (298 aa).

The Zn(2+) site is built by H75, H232, and D236. H259 (proton donor) is an active-site residue.

It belongs to the LpxC family. Requires Zn(2+) as cofactor.

It carries out the reaction a UDP-3-O-[(3R)-3-hydroxyacyl]-N-acetyl-alpha-D-glucosamine + H2O = a UDP-3-O-[(3R)-3-hydroxyacyl]-alpha-D-glucosamine + acetate. The protein operates within glycolipid biosynthesis; lipid IV(A) biosynthesis; lipid IV(A) from (3R)-3-hydroxytetradecanoyl-[acyl-carrier-protein] and UDP-N-acetyl-alpha-D-glucosamine: step 2/6. In terms of biological role, catalyzes the hydrolysis of UDP-3-O-myristoyl-N-acetylglucosamine to form UDP-3-O-myristoylglucosamine and acetate, the committed step in lipid A biosynthesis. This chain is UDP-3-O-acyl-N-acetylglucosamine deacetylase, found in Wolinella succinogenes (strain ATCC 29543 / DSM 1740 / CCUG 13145 / JCM 31913 / LMG 7466 / NCTC 11488 / FDC 602W) (Vibrio succinogenes).